We begin with the raw amino-acid sequence, 356 residues long: MKREILLERIDKLKQLMPWYVLEYYQSKLAVPYSFTTLYEYLKEYDRFFSWVLESGISNADKISDIPLSVLENMSKKDMESFILYLRERPLLNANTTKQGVSQTTINRTLSALSSLYKYLTEEVENDQGEPYFYRNVMKKVSTKKKKETLAARAENIKQKLFLGDETEGFLTYIDQEHPQQLSNRALSSFNKNKERDLAIIALLLASGVRLSEAVNLDLRDLNLKMMVIDVTRKGGKRDSVNVAAFAKPYLENYLAIRNQRYKTEKTDTALFLTLYRGVPNRIDASSVEKMVAKYSEDFKVRVTPHKLRHTLATRLYDATKSQVLVSHQLGHASTQVTDLYTHIVNDEQKNALDSL.

The region spanning 16-121 (LMPWYVLEYY…ALSSLYKYLT (106 aa)) is the Core-binding (CB) domain. One can recognise a Tyr recombinase domain in the interval 169–354 (GFLTYIDQEH…VNDEQKNALD (186 aa)). Catalysis depends on residues Arg-210, Lys-234, His-306, Arg-309, and His-332. The active-site O-(3'-phospho-DNA)-tyrosine intermediate is the Tyr-341.

This sequence belongs to the 'phage' integrase family. XerS subfamily.

The protein localises to the cytoplasm. Its activity is regulated as follows. FtsK is required for recombination. Its function is as follows. Site-specific tyrosine recombinase, which acts by catalyzing the cutting and rejoining of the recombining DNA molecules. Essential to convert dimers of the bacterial chromosome into monomers to permit their segregation at cell division. The protein is Tyrosine recombinase XerS of Streptococcus pneumoniae serotype 2 (strain D39 / NCTC 7466).